Here is a 428-residue protein sequence, read N- to C-terminus: D-amino acid dehydrogenase (428 aa).

3–17 (VVILGSGVVGVASAY) contributes to the FAD binding site.

Belongs to the DadA oxidoreductase family. FAD is required as a cofactor.

The enzyme catalyses a D-alpha-amino acid + A + H2O = a 2-oxocarboxylate + AH2 + NH4(+). The protein operates within amino-acid degradation; D-alanine degradation; NH(3) and pyruvate from D-alanine: step 1/1. Oxidative deamination of D-amino acids. The sequence is that of D-amino acid dehydrogenase from Burkholderia multivorans (strain ATCC 17616 / 249).